Reading from the N-terminus, the 289-residue chain is Protease HtpX homolog (289 aa).

2 helical membrane-spanning segments follow: residues 8–28 (LALLAALSGLLIAISYWVIGG) and 29–49 (SSGLIIGIGLAAVTNLLSWYQ). His-132 contacts Zn(2+). Glu-133 is an active-site residue. Zn(2+) is bound at residue His-136. 2 consecutive transmembrane segments (helical) span residues 151–171 (VAGAISFLAQMVSYSLWFGGI) and 183–203 (LGVLLTVVLAPIAATIIQLAI). Glu-208 is a binding site for Zn(2+).

It belongs to the peptidase M48B family. Zn(2+) serves as cofactor.

The protein localises to the cell inner membrane. The polypeptide is Protease HtpX homolog (Trichormus variabilis (strain ATCC 29413 / PCC 7937) (Anabaena variabilis)).